We begin with the raw amino-acid sequence, 210 residues long: Outer-membrane lipoprotein LolB (210 aa).

The signal sequence occupies residues 1-29 (MSLISNNEERSLRVRYCIAIALSALLISG). Cys-30 is lipidated: N-palmitoyl cysteine. The S-diacylglycerol cysteine moiety is linked to residue Cys-30.

It belongs to the LolB family. In terms of assembly, monomer.

It is found in the cell outer membrane. Its function is as follows. Plays a critical role in the incorporation of lipoproteins in the outer membrane after they are released by the LolA protein. In Coxiella burnetii (strain CbuK_Q154) (Coxiella burnetii (strain Q154)), this protein is Outer-membrane lipoprotein LolB.